Here is a 223-residue protein sequence, read N- to C-terminus: Putative 3-methyladenine DNA glycosylase (223 aa).

Belongs to the DNA glycosylase MPG family.

The chain is Putative 3-methyladenine DNA glycosylase from Rickettsia typhi (strain ATCC VR-144 / Wilmington).